Consider the following 106-residue polypeptide: uncharacterized protein (106 aa).

A helical membrane pass occupies residues 85-101; the sequence is AVALVLLCVSHHLTYLP.

Its subcellular location is the membrane. This is an uncharacterized protein from Saccharomyces cerevisiae (strain ATCC 204508 / S288c) (Baker's yeast).